Reading from the N-terminus, the 1308-residue chain is Cadherin-related family member 2 (1308 aa).

A signal peptide spans 1–20 (MAWLWLLCALLPAFMVSVTA). The Extracellular portion of the chain corresponds to 21-1152 (NSPPSFGVNM…EPDQQKLLTS (1132 aa)). Cadherin domains follow at residues 33-124 (VTLP…IPVF), 125-241 (LNTE…DPRF), 242-353 (IREF…KPEF), 368-480 (AQVN…RPVF), 481-586 (SQSL…PPVV), 586-695 (VRGS…LPVF), 695-807 (FNQS…PPTL), 809-927 (AASL…APYF), and 929-1051 (PNNQ…RLQF). The helical transmembrane segment at 1153–1173 (VIIGLVVSLVLVLVILITALV) threads the bilayer. Residues 1174-1308 (CLRKSYHRKL…TNPGLDTTDL (135 aa)) lie on the Cytoplasmic side of the membrane. Residues 1178 to 1308 (SYHRKLRAMK…TNPGLDTTDL (131 aa)) form a mediates interaction with USH1C and MYO7B and is required for proper localization to microvilli tips and function in microvilli organization region. A Phosphoserine modification is found at S1245. The interval 1251 to 1308 (VDLDMDSKEFKRKDLPGDPPEPDPEPLTAVLSGRSAGASEQQKKNLSFTNPGLDTTDL) is disordered. Over residues 1255-1266 (MDSKEFKRKDLP) the composition is skewed to basic and acidic residues. The span at 1288–1308 (ASEQQKKNLSFTNPGLDTTDL) shows a compositional bias: polar residues. S1297 is subject to Phosphoserine.

Part of the IMAC/intermicrovillar adhesion complex/intermicrovillar tip-link complex composed of ANKS4B, MYO7B, USH1C, CDHR2 and CDHR5. Interacts with MAST2. Interacts (via cytoplasmic domain) with USH1C and MYO7B; required for proper localization of CDHR2 to microvilli tips and its function in brush border differentiation.

The protein localises to the apical cell membrane. Its subcellular location is the cell projection. It localises to the microvillus membrane. The protein resides in the cell junction. In terms of biological role, intermicrovillar adhesion molecule that forms, via its extracellular domain, calcium-dependent heterophilic complexes with CDHR5 on adjacent microvilli. Thereby, controls the packing of microvilli at the apical membrane of epithelial cells. Through its cytoplasmic domain, interacts with microvillus cytoplasmic proteins to form the intermicrovillar adhesion complex/IMAC. This complex plays a central role in microvilli and epithelial brush border differentiation. May also play a role in cell-cell adhesion and contact inhibition in epithelial cells. In Mus musculus (Mouse), this protein is Cadherin-related family member 2.